We begin with the raw amino-acid sequence, 395 residues long: [LysW]-aminoadipate semialdehyde transaminase (395 aa).

Residues Gly113–Thr114 and Phe140 each bind pyridoxal 5'-phosphate. Arg143 is a substrate binding site. Asp225–Gln228 provides a ligand contact to pyridoxal 5'-phosphate. Lys254 carries the N6-(pyridoxal phosphate)lysine modification. Thr282 is a binding site for substrate. A pyridoxal 5'-phosphate-binding site is contributed by Thr283.

This sequence belongs to the class-III pyridoxal-phosphate-dependent aminotransferase family. LysJ subfamily. As to quaternary structure, homodimer. Pyridoxal 5'-phosphate is required as a cofactor.

The protein localises to the cytoplasm. The catalysed reaction is [amino-group carrier protein]-C-terminal-gamma-(L-lysyl)-L-glutamate + 2-oxoglutarate = [amino-group carrier protein]-C-terminal-N-(1-carboxy-5-oxopentan-1-yl)-L-glutamine + L-glutamate. Its pathway is amino-acid biosynthesis; L-lysine biosynthesis via AAA pathway; L-lysine from L-alpha-aminoadipate (Thermus route): step 4/5. Functionally, catalyzes the transfer of the amino group of L-glutamate to [LysW]-aminoadipate 6-semialdehyde, generating [LysW]-gamma-L-lysine. The polypeptide is [LysW]-aminoadipate semialdehyde transaminase (Thermus thermophilus (strain ATCC 27634 / DSM 579 / HB8)).